Consider the following 156-residue polypeptide: Small ribosomal subunit protein uS7 (156 aa).

It belongs to the universal ribosomal protein uS7 family. In terms of assembly, part of the 30S ribosomal subunit. Contacts proteins S9 and S11.

Functionally, one of the primary rRNA binding proteins, it binds directly to 16S rRNA where it nucleates assembly of the head domain of the 30S subunit. Is located at the subunit interface close to the decoding center, probably blocks exit of the E-site tRNA. The polypeptide is Small ribosomal subunit protein uS7 (Methylococcus capsulatus (strain ATCC 33009 / NCIMB 11132 / Bath)).